The chain runs to 503 residues: Cytochrome P450 3A8 (503 aa).

Position 442 (Cys-442) interacts with heme.

The protein belongs to the cytochrome P450 family. Requires heme as cofactor.

The protein localises to the endoplasmic reticulum membrane. It is found in the microsome membrane. The catalysed reaction is an organic molecule + reduced [NADPH--hemoprotein reductase] + O2 = an alcohol + oxidized [NADPH--hemoprotein reductase] + H2O + H(+). Its function is as follows. Catalyzes nifedipine and nilvadipine oxidations. This is Cytochrome P450 3A8 (CYP3A8) from Macaca fascicularis (Crab-eating macaque).